A 185-amino-acid polypeptide reads, in one-letter code: uncharacterized protein (185 aa).

A run of 3 helical transmembrane segments spans residues 9–29 (LVAA…WAFL), 72–92 (VLFF…ILIV), and 111–131 (FFFI…IPFL).

It localises to the cell membrane. This is an uncharacterized protein from Bacillus subtilis (strain 168).